The primary structure comprises 364 residues: CCA-adding enzyme (364 aa).

ATP contacts are provided by Gly19 and Arg22. 2 residues coordinate CTP: Gly19 and Arg22. Residues Asp32 and Asp34 each coordinate Mg(2+). ATP-binding residues include Arg102, Arg148, and Arg151. CTP-binding residues include Arg102, Arg148, and Arg151.

It belongs to the tRNA nucleotidyltransferase/poly(A) polymerase family. Bacterial CCA-adding enzyme type 2 subfamily. It depends on Mg(2+) as a cofactor.

It carries out the reaction a tRNA precursor + 2 CTP + ATP = a tRNA with a 3' CCA end + 3 diphosphate. The enzyme catalyses a tRNA with a 3' CCA end + 2 CTP + ATP = a tRNA with a 3' CCACCA end + 3 diphosphate. Its function is as follows. Catalyzes the addition and repair of the essential 3'-terminal CCA sequence in tRNAs without using a nucleic acid template. Adds these three nucleotides in the order of C, C, and A to the tRNA nucleotide-73, using CTP and ATP as substrates and producing inorganic pyrophosphate. tRNA 3'-terminal CCA addition is required both for tRNA processing and repair. Also involved in tRNA surveillance by mediating tandem CCA addition to generate a CCACCA at the 3' terminus of unstable tRNAs. While stable tRNAs receive only 3'-terminal CCA, unstable tRNAs are marked with CCACCA and rapidly degraded. The polypeptide is CCA-adding enzyme (Bordetella bronchiseptica (strain ATCC BAA-588 / NCTC 13252 / RB50) (Alcaligenes bronchisepticus)).